The primary structure comprises 455 residues: Kynurenine 3-monooxygenase (455 aa).

This sequence belongs to the aromatic-ring hydroxylase family. KMO subfamily. It depends on FAD as a cofactor.

It carries out the reaction L-kynurenine + NADPH + O2 + H(+) = 3-hydroxy-L-kynurenine + NADP(+) + H2O. The protein operates within cofactor biosynthesis; NAD(+) biosynthesis; quinolinate from L-kynurenine: step 1/3. Functionally, catalyzes the hydroxylation of L-kynurenine (L-Kyn) to form 3-hydroxy-L-kynurenine (L-3OHKyn). Required for synthesis of quinolinic acid. This Xanthomonas oryzae pv. oryzae (strain MAFF 311018) protein is Kynurenine 3-monooxygenase.